A 471-amino-acid polypeptide reads, in one-letter code: Argininosuccinate lyase (471 aa).

The protein belongs to the lyase 1 family. Argininosuccinate lyase subfamily.

The protein resides in the cytoplasm. It carries out the reaction 2-(N(omega)-L-arginino)succinate = fumarate + L-arginine. It functions in the pathway amino-acid biosynthesis; L-arginine biosynthesis; L-arginine from L-ornithine and carbamoyl phosphate: step 3/3. This is Argininosuccinate lyase from Ehrlichia canis (strain Jake).